The following is a 316-amino-acid chain: Pantothenate kinase (316 aa).

An ATP-binding site is contributed by 95-102 (GSVAVGKS).

The protein belongs to the prokaryotic pantothenate kinase family.

The protein localises to the cytoplasm. The catalysed reaction is (R)-pantothenate + ATP = (R)-4'-phosphopantothenate + ADP + H(+). It functions in the pathway cofactor biosynthesis; coenzyme A biosynthesis; CoA from (R)-pantothenate: step 1/5. The protein is Pantothenate kinase of Salmonella choleraesuis (strain SC-B67).